Reading from the N-terminus, the 605-residue chain is DNA primase (605 aa).

Residues 38 to 62 (CPFHDEKTPSFTVSEDKQICHCFGC) form a CHC2-type zinc finger. The Toprim domain maps to 260–341 (DEIVLLEGFM…NVFVIQLPSG (82 aa)). Residues glutamate 266, aspartate 310, and aspartate 312 each coordinate Mg(2+).

It belongs to the DnaG primase family. In terms of assembly, monomer. Interacts with DnaB. Requires Zn(2+) as cofactor. Mg(2+) serves as cofactor.

The catalysed reaction is ssDNA + n NTP = ssDNA/pppN(pN)n-1 hybrid + (n-1) diphosphate.. RNA polymerase that catalyzes the synthesis of short RNA molecules used as primers for DNA polymerase during DNA replication. The chain is DNA primase from Staphylococcus aureus.